The primary structure comprises 435 residues: WD repeat domain phosphoinositide-interacting protein 2 (435 aa).

One copy of the WD 1 repeat lies at 182–222; sequence AHDSPLAALAFDASGTKLATASEKGTVIRVFSIPEGQKLFE. The L/FRRG motif motif lies at 223 to 226; it reads FRRG. WD repeat units lie at residues 228–267 and 311–349; these read KRCV…EKPP and GHKN…GGEC. Residues 386-435 are disordered; sequence VTKTYPPPSPTRHAYADDLGAVGGASEEDEMGNLRLDEDNENPPMILQTE.

Belongs to the WD repeat PROPPIN family.

Its subcellular location is the preautophagosomal structure membrane. Functionally, component of the autophagy machinery that controls the major intracellular degradation process by which cytoplasmic materials are packaged into autophagosomes and delivered to lysosomes for degradation. Involved in an early step of the formation of preautophagosomal structures. The polypeptide is WD repeat domain phosphoinositide-interacting protein 2 (wipi2) (Xenopus laevis (African clawed frog)).